The sequence spans 31 residues: Cytochrome b6-f complex subunit 6 (31 aa).

Residues 4–24 (ITSYFGFLLAALTITSALFIG) traverse the membrane as a helical segment.

The protein belongs to the PetL family. The 4 large subunits of the cytochrome b6-f complex are cytochrome b6, subunit IV (17 kDa polypeptide, PetD), cytochrome f and the Rieske protein, while the 4 small subunits are PetG, PetL, PetM and PetN. The complex functions as a dimer.

It localises to the plastid. It is found in the chloroplast thylakoid membrane. Its function is as follows. Component of the cytochrome b6-f complex, which mediates electron transfer between photosystem II (PSII) and photosystem I (PSI), cyclic electron flow around PSI, and state transitions. PetL is important for photoautotrophic growth as well as for electron transfer efficiency and stability of the cytochrome b6-f complex. This is Cytochrome b6-f complex subunit 6 from Hamamelis virginiana (Witch-hazel).